The primary structure comprises 54 residues: Large ribosomal subunit protein bL32c (54 aa).

It belongs to the bacterial ribosomal protein bL32 family.

It localises to the plastid. The protein resides in the chloroplast. This chain is Large ribosomal subunit protein bL32c, found in Helianthus annuus (Common sunflower).